Reading from the N-terminus, the 573-residue chain is E3 ubiquitin-protein ligase RNF168 (573 aa).

The segment at 16-55 (CQICVEILFEPVTLPCNHTLCKPCFESTVEKASLCCPFCR) adopts an RING-type zinc-finger fold. Ser-70 carries the post-translational modification Phosphoserine. An LR motif 1 motif is present at residues 110–128 (LSKPGELRREYEEEISKVE). The UMI motif motif lies at 143-151 (EEYIQKLLA). Disordered stretches follow at residues 153–174 (EEEE…QLKS) and 196–277 (ASPL…EDMP). Basic and acidic residues predominate over residues 157 to 174 (EKRQAEKRHREMEEQLKS). The MIU motif 1 motif lies at 168-191 (MEEQLKSDEELARRLSLDINNFCE). Ser-197 carries the phosphoserine modification. Residue Lys-210 forms a Glycyl lysine isopeptide (Lys-Gly) (interchain with G-Cter in SUMO2) linkage. Over residues 231–243 (PKSQLGSASQSEV) the composition is skewed to polar residues. Positions 245–261 (QEDRKSSMSKKIDDNSD) are enriched in basic and acidic residues. Phosphothreonine is present on Thr-363. At Ser-416 the chain carries Phosphoserine. An MIU motif 2 motif is present at residues 440–463 (RHKQEKQDRLLALQLQEEVDQEQM). The segment at 456–528 (EEVDQEQMRP…NHQQPSFKIQ (73 aa)) is disordered. A compositionally biased stretch (basic and acidic residues) spans 461-470 (EQMRPDRQKG). Residues 467–478 (RQKGSPDGYQLR) carry the LR motif 2 motif. Phosphoserine is present on Ser-471. The span at 494 to 519 (NSRDRNSKRQTELEQPKPRTDSKNEN) shows a compositional bias: basic and acidic residues. Lys-530 participates in a covalent cross-link: Glycyl lysine isopeptide (Lys-Gly) (interchain with G-Cter in SUMO2). Positions 540-573 (NSTNDNCNVSKTAHSLQPSKSQKSIFQMFQRVTK) are disordered.

Belongs to the RNF168 family. As to quaternary structure, monomer. Interacts with UBE2N/UBC13. Post-translationally, sumoylated with SUMO1 by PIAS4 in response to double-strand breaks (DSBs). In terms of processing, ubiquitinated.

The protein localises to the nucleus. It carries out the reaction S-ubiquitinyl-[E2 ubiquitin-conjugating enzyme]-L-cysteine + [acceptor protein]-L-lysine = [E2 ubiquitin-conjugating enzyme]-L-cysteine + N(6)-ubiquitinyl-[acceptor protein]-L-lysine.. It functions in the pathway protein modification; protein ubiquitination. In terms of biological role, E3 ubiquitin-protein ligase required for accumulation of repair proteins to sites of DNA damage. Acts with UBE2N/UBC13 to amplify the RNF8-dependent histone ubiquitination. Recruited to sites of DNA damage at double-strand breaks (DSBs) by binding to ubiquitinated histone H2A and H2AX and amplifies the RNF8-dependent H2A ubiquitination, promoting the formation of 'Lys-63'-linked ubiquitin conjugates. This leads to concentrate ubiquitinated histones H2A and H2AX at DNA lesions to the threshold required for recruitment of TP53BP1 and BRCA1. Also recruited at DNA interstrand cross-links (ICLs) sites and promotes accumulation of 'Lys-63'-linked ubiquitination of histones H2A and H2AX, leading to recruitment of FAAP20 and Fanconi anemia (FA) complex, followed by interstrand cross-link repair. H2A ubiquitination also mediates the ATM-dependent transcriptional silencing at regions flanking DSBs in cis, a mechanism to avoid collision between transcription and repair intermediates. Also involved in class switch recombination in immune system, via its role in regulation of DSBs repair. Following DNA damage, promotes the ubiquitination and degradation of JMJD2A/KDM4A in collaboration with RNF8, leading to unmask H4K20me2 mark and promote the recruitment of TP53BP1 at DNA damage sites. Not able to initiate 'Lys-63'-linked ubiquitination in vitro; possibly due to partial occlusion of the UBE2N/UBC13-binding region. Catalyzes monoubiquitination of 'Lys-13' and 'Lys-15' of nucleosomal histone H2A (H2AK13Ub and H2AK15Ub, respectively). The polypeptide is E3 ubiquitin-protein ligase RNF168 (Bos taurus (Bovine)).